The sequence spans 1170 residues: Cellulose synthase-like protein D2 (1170 aa).

Disordered regions lie at residues 1–48, 54–73, and 269–295; these read MASS…RRTH, SYSR…MSPE, and NEVD…EFTS. The span at 10 to 24 shows a compositional bias: low complexity; the sequence is RHSNSSRLSRMSYSG. Residues 273-288 are compositionally biased toward gly residues; the sequence is NGGGGGGGGGLGGGDG. The next 2 helical transmembrane spans lie at 311–331 and 341–361; these read VLSP…LFLA and AMWL…SWLL. Residue D441 is part of the active site. Residues 527-551 are a coiled coil; it reads HAREEIKAMKRQREAALDDVVEAVK. Residue D873 is part of the active site. Transmembrane regions (helical) follow at residues 955 to 975, 981 to 1001, 1027 to 1047, 1070 to 1090, 1104 to 1124, and 1134 to 1154; these read IFLI…QFIV, TFLT…VLEI, LAAV…SFTL, SLMI…AVGF, LLGG…FAKG, and TIVF…WVAI.

The protein belongs to the glycosyltransferase 2 family. Plant cellulose synthase-like D subfamily.

It localises to the golgi apparatus membrane. Thought to be a Golgi-localized beta-glycan synthase that polymerize the backbones of noncellulosic polysaccharides (hemicelluloses) of plant cell wall. This Oryza sativa subsp. japonica (Rice) protein is Cellulose synthase-like protein D2 (CSLD2).